Reading from the N-terminus, the 200-residue chain is Ciliary neurotrophic factor (200 aa).

Belongs to the CNTF family. In terms of assembly, homodimer. In terms of tissue distribution, nervous system.

It is found in the cytoplasm. Its function is as follows. CNTF is a survival factor for various neuronal cell types. Seems to prevent the degeneration of motor axons after axotomy. This is Ciliary neurotrophic factor (CNTF) from Homo sapiens (Human).